A 208-amino-acid polypeptide reads, in one-letter code: Uracil phosphoribosyltransferase (208 aa).

5-phospho-alpha-D-ribose 1-diphosphate-binding positions include Arg-78, Arg-103, and 130-138 (DPMLATGGS). Uracil is bound by residues Ile-193 and 198-200 (GDA). 5-phospho-alpha-D-ribose 1-diphosphate is bound at residue Asp-199.

The protein belongs to the UPRTase family. It depends on Mg(2+) as a cofactor.

It carries out the reaction UMP + diphosphate = 5-phospho-alpha-D-ribose 1-diphosphate + uracil. It participates in pyrimidine metabolism; UMP biosynthesis via salvage pathway; UMP from uracil: step 1/1. Its activity is regulated as follows. Allosterically activated by GTP. In terms of biological role, catalyzes the conversion of uracil and 5-phospho-alpha-D-ribose 1-diphosphate (PRPP) to UMP and diphosphate. This chain is Uracil phosphoribosyltransferase, found in Escherichia coli O139:H28 (strain E24377A / ETEC).